The chain runs to 139 residues: Putative pre-16S rRNA nuclease (139 aa).

Belongs to the YqgF nuclease family.

It localises to the cytoplasm. Could be a nuclease involved in processing of the 5'-end of pre-16S rRNA. This is Putative pre-16S rRNA nuclease from Streptococcus pyogenes serotype M3 (strain ATCC BAA-595 / MGAS315).